Reading from the N-terminus, the 57-residue chain is Small hydrophobic protein (57 aa).

Residues 1 to 8 are Virion surface-facing; it reads MPAIQPPL. A helical membrane pass occupies residues 9–29; it reads YPTFLLLILLSLIITLYVWII. At 30 to 57 the chain is on the intravirion side; it reads STITYKTAVRHAALHQRSFSRWSLDHSL.

It belongs to the rubulavirus small hydrophobic protein family. In terms of assembly, interacts with host TNFRSF1A, RIPK1 and IRAK1; these interactions interfere with host NF-kappa-B activation at the level of receptor complexes. Interacts with host protein UBQLN4.

Its subcellular location is the virion membrane. It localises to the host cell membrane. Its function is as follows. Plays a role in the inhibition of the host NF-kappa-B pathway. This inhibition occurs at the receptor level, by preventing the signaling of TNFR1 as well as IL-1R and TLR3. This is Small hydrophobic protein (SH) from Mumps virus genotype B (strain Miyahara vaccine) (MuV).